We begin with the raw amino-acid sequence, 95 residues long: Large ribosomal subunit protein bL25 (95 aa).

It belongs to the bacterial ribosomal protein bL25 family. In terms of assembly, part of the 50S ribosomal subunit; part of the 5S rRNA/L5/L18/L25 subcomplex. Contacts the 5S rRNA. Binds to the 5S rRNA independently of L5 and L18.

Its function is as follows. This is one of the proteins that binds to the 5S RNA in the ribosome where it forms part of the central protuberance. The protein is Large ribosomal subunit protein bL25 of Chromobacterium violaceum (strain ATCC 12472 / DSM 30191 / JCM 1249 / CCUG 213 / NBRC 12614 / NCIMB 9131 / NCTC 9757 / MK).